The sequence spans 376 residues: 1-acyl-sn-glycerol-3-phosphate acyltransferase gamma (376 aa).

The Cytoplasmic segment spans residues 1 to 124 (MGLLAFLKTQ…LGSSKVLAKK (124 aa)). The HXXXXD motif signature appears at 96-101 (HNFEID). A helical membrane pass occupies residues 125–145 (ELLYVPLIGWTWYFLEIVFCK). Residues 146–316 (RKWEEDRDTV…TLLNFLSWAT (171 aa)) lie on the Lumenal side of the membrane. A helical transmembrane segment spans residues 317-339 (ILLSPLFSFVLGVFASGSPLLIL). The Cytoplasmic segment spans residues 340–376 (TFLGFVGAASFGVRRLIGVTEIEKGSSYGNQEFKKKE).

Belongs to the 1-acyl-sn-glycerol-3-phosphate acyltransferase family.

The protein localises to the endoplasmic reticulum membrane. It localises to the nucleus envelope. The catalysed reaction is a 1-acyl-sn-glycero-3-phosphate + an acyl-CoA = a 1,2-diacyl-sn-glycero-3-phosphate + CoA. The enzyme catalyses pentadecanoyl-CoA + 1-(9Z-octadecenoyl)-sn-glycero-3-phosphate = 1-(9Z)-octadecenoyl-2-pentadecanoyl-sn-glycero-3-phosphate + CoA. It catalyses the reaction heptadecanoyl-CoA + 1-(9Z-octadecenoyl)-sn-glycero-3-phosphate = 1-(9Z)-octadecenoyl-2-heptadecanoyl-sn-glycero-3-phosphate + CoA. It carries out the reaction 1-(9Z-octadecenoyl)-sn-glycero-3-phosphate + octadecanoyl-CoA = 1-(9Z-octadecenoyl)-2-octadecanoyl-sn-glycero-3-phosphate + CoA. The catalysed reaction is nonadecanoyl-CoA + 1-(9Z-octadecenoyl)-sn-glycero-3-phosphate = 1-(9Z)-octadecenoyl-2-nonadecanoyl-sn-glycero-3-phosphate + CoA. The enzyme catalyses 1-(9Z-octadecenoyl)-sn-glycero-3-phosphate + (5Z,8Z,11Z,14Z)-eicosatetraenoyl-CoA = 1-(9Z)-octadecenoyl-2-(5Z,8Z,11Z,14Z)-eicosatetraenoyl-sn-glycero-3-phosphate + CoA. It catalyses the reaction 1-(9Z-octadecenoyl)-sn-glycero-3-phosphate + (9Z)-octadecenoyl-CoA = 1,2-di-(9Z-octadecenoyl)-sn-glycero-3-phosphate + CoA. It carries out the reaction 1-(9Z-octadecenoyl)-sn-glycero-3-phosphate + (9Z,12Z)-octadecadienoyl-CoA = 1-(9Z)-octadecenoyl-2-(9Z,12Z)-octadecadienoyl-sn-glycero-3-phosphate + CoA. The catalysed reaction is 1-(9Z-octadecenoyl)-sn-glycero-3-phosphocholine + (5Z,8Z,11Z,14Z)-eicosatetraenoyl-CoA = 1-(9Z)-octadecenoyl-2-(5Z,8Z,11Z,14Z)-icosatetraenoyl-sn-glycero-3-phosphocholine + CoA. The enzyme catalyses 1-(9Z-octadecenoyl)-sn-glycero-3-phospho-(1D-myo-inositol) + (5Z,8Z,11Z,14Z)-eicosatetraenoyl-CoA = 1-(9Z-octadecenoyl)-2-(5Z,8Z,11Z,14Z-eicosatetraenoyl)-sn-glycero-3-phospho-1D-myo-inositol + CoA. It catalyses the reaction 1-(9Z-octadecenoyl)-sn-glycero-3-phospho-L-serine + (5Z,8Z,11Z,14Z)-eicosatetraenoyl-CoA = 1-(9Z-octadecenoyl)-2-(5Z,8Z,11Z,14Z-eicosatetraenoyl)-sn-glycero-3-phospho-L-serine + CoA. It carries out the reaction 1-hexadecanoyl-sn-glycero-3-phosphate + (9Z)-octadecenoyl-CoA = 1-hexadecanoyl-2-(9Z-octadecenoyl)-sn-glycero-3-phosphate + CoA. The catalysed reaction is 1-hexadecanoyl-sn-glycero-3-phosphate + (5Z,8Z,11Z,14Z)-eicosatetraenoyl-CoA = 1-hexadecanoyl-2-(5Z,8Z,11Z,14Z-eicosatetraenoyl)-sn-glycero-3-phosphate + CoA. The enzyme catalyses 1-heptadecanoyl-sn-glycero-3-phosphate + (5Z,8Z,11Z,14Z)-eicosatetraenoyl-CoA = 1-heptadecanoyl-2-(5Z,8Z,11Z,14Z)-eicosatetraenoyl-sn-glycero-3-phosphate + CoA. It catalyses the reaction 1-octadecanoyl-sn-glycero-3-phosphate + (9Z)-octadecenoyl-CoA = 1-octadecanoyl-2-(9Z-octadecenoyl)-sn-glycero-3-phosphate + CoA. It carries out the reaction 1-octadecanoyl-sn-glycero-3-phosphate + (5Z,8Z,11Z,14Z)-eicosatetraenoyl-CoA = 1-octadecanoyl-2-(5Z,8Z,11Z,14Z-eicosatetraenoyl)-sn-glycero-3-phosphate + CoA. The catalysed reaction is 1-(9Z-octadecenoyl)-sn-glycero-3-phosphate + hexadecanoyl-CoA = 1-hexadecanoyl-2-(9Z-octadecenoyl)-sn-glycero-3-phosphate + CoA. The enzyme catalyses 1-O-(9Z-octadecenyl)-sn-glycero-3-phosphate + (5Z,8Z,11Z,14Z)-eicosatetraenoyl-CoA = 1-O-(9Z-octadecenyl)-2-(5Z,8Z,11Z,14Z-eicosatetraenoyl)-sn-glycero-3-phosphate + CoA. It catalyses the reaction a 1-acyl-sn-glycero-3-phospho-(1D-myo-inositol) + (5Z,8Z,11Z,14Z)-eicosatetraenoyl-CoA = a 1-acyl-2-(5Z,8Z,11Z,14Z-eicosatetraenoyl)-sn-glycero-3-phospho-(1D-myo-inositol) + CoA. It functions in the pathway phospholipid metabolism; CDP-diacylglycerol biosynthesis; CDP-diacylglycerol from sn-glycerol 3-phosphate: step 2/3. Its function is as follows. Converts 1-acyl-sn-glycerol-3-phosphate (lysophosphatidic acid or LPA) into 1,2-diacyl-sn-glycerol-3-phosphate (phosphatidic acid or PA) by incorporating an acyl moiety at the sn-2 position of the glycerol backbone. Acts on LPA containing saturated or unsaturated fatty acids C16:0-C20:4 at the sn-1 position using C18:1, C20:4 or C18:2-CoA as the acyl donor. Also acts on lysophosphatidylcholine, lysophosphatidylinositol and lysophosphatidylserine using C18:1 or C20:4-CoA. Has a preference for arachidonoyl-CoA as a donor. Also has a modest lysophosphatidylinositol acyltransferase (LPIAT) activity, converts lysophosphatidylinositol (LPI) into phosphatidylinositol. This chain is 1-acyl-sn-glycerol-3-phosphate acyltransferase gamma (AGPAT3), found in Pongo abelii (Sumatran orangutan).